Consider the following 156-residue polypeptide: 6,7-dimethyl-8-ribityllumazine synthase (156 aa).

Residues Phe23, 57-59 (AFE), and 81-83 (AVI) contribute to the 5-amino-6-(D-ribitylamino)uracil site. A (2S)-2-hydroxy-3-oxobutyl phosphate-binding site is contributed by 86-87 (AT). Residue His89 is the Proton donor of the active site. 5-amino-6-(D-ribitylamino)uracil is bound at residue Phe114. Arg128 is a (2S)-2-hydroxy-3-oxobutyl phosphate binding site.

Belongs to the DMRL synthase family.

It carries out the reaction (2S)-2-hydroxy-3-oxobutyl phosphate + 5-amino-6-(D-ribitylamino)uracil = 6,7-dimethyl-8-(1-D-ribityl)lumazine + phosphate + 2 H2O + H(+). The protein operates within cofactor biosynthesis; riboflavin biosynthesis; riboflavin from 2-hydroxy-3-oxobutyl phosphate and 5-amino-6-(D-ribitylamino)uracil: step 1/2. Catalyzes the formation of 6,7-dimethyl-8-ribityllumazine by condensation of 5-amino-6-(D-ribitylamino)uracil with 3,4-dihydroxy-2-butanone 4-phosphate. This is the penultimate step in the biosynthesis of riboflavin. This chain is 6,7-dimethyl-8-ribityllumazine synthase, found in Campylobacter concisus (strain 13826).